Here is a 1360-residue protein sequence, read N- to C-terminus: KN motif and ankyrin repeat domains 1 (1360 aa).

Positions 30–68 (PYFVETPYGFQLDLDFVKYVDDIQKGNTIKKLNIQKRRK) are KN motif; Interaction with TLN1. Residues 41-44 (LDLD) carry the Important for binding to TLN1 motif. A Nuclear export signal 1 (NES 1) motif is present at residues 43–52 (LDFVKYVDDI). The short motif at 65-68 (KRRK) is the Nuclear localization signal 1 (NLS 1) element. The disordered stretch occupies residues 66–103 (RRKPSVPCPEVRAIPGHQGVWTSTESLSSSNSDDSKQC). The span at 88-103 (STESLSSSNSDDSKQC) shows a compositional bias: low complexity. Residues 125-134 (LETSPTFAVS) carry the Nuclear export signal 2 (NES 2) motif. S186 is subject to Phosphoserine. Residues 221–253 (DYNSYVPAAPTTSSMGSSVRHSPLSSGISTPVT) are disordered. A compositionally biased stretch (polar residues) spans 230–253 (PTTSSMGSSVRHSPLSSGISTPVT). The segment at 244-339 (LSSGISTPVT…SQLELLARAR (96 aa)) is interaction with PPFIBP1. Residues 260–311 (LQHIREQMAIALKRLKELEEQVRTIPVLQVKISVLQEEKRQLASQLKSQRAS) adopt a coiled-coil conformation. A Phosphoserine modification is found at S325. Coiled coils occupy residues 367–394 (FRQLTADMQALERKIQDSSCEVASELRE) and 453–487 (ITEADKEIELQQQTIEALKEKIYRLEVQLKETTHD). Residues 618–627 (LTLLKTNLNL) carry the Nuclear export signal 3 (NES 3) motif. Disordered regions lie at residues 929–954 (SQPEVEAETAEGKHSRGHEQFPMQGS) and 983–1053 (IMKK…DTRG). Composition is skewed to basic and acidic residues over residues 938-947 (AEGKHSRGHE) and 985-995 (KKSDGNKDSNG). The Nuclear localization signal 2 (NLS 2) signature appears at 985–998 (KKSDGNKDSNGAKK). Residues 1010–1025 (ETTSSDESSSDGSSSS) are compositionally biased toward low complexity. Over residues 1026–1047 (ESDDECDTIGYPPEEEEEEEEK) the composition is skewed to acidic residues. The segment at 1081–1360 (EPEKEEIRER…PGPTHRGSFD (280 aa)) is interaction with KIF21A. The ANK 0; degenerate repeat unit spans residues 1117-1154 (KDMRICLNTLQHDWFRVSSQKSAVPAMVGDYIAAFEAV). ANK repeat units lie at residues 1169–1199 (NGNTALHYSVSHSNFQIVKLLLDADVCNVDH), 1203–1236 (AGYTPIMLAALAAVEAEKDMQVVEELFSCGDVNA), 1241–1270 (AGQTALMLAVSHGRIDMVKGLLACGADVNI), 1274–1306 (EGSTALMCASEHGHVEIVKLLLAQPGCNGHLED), and 1308–1337 (DGSTALSIALEAGHKDIAVLLYAHLNFSKA). Residues 1337 to 1360 (AQSPSTPRLGRKTSPGPTHRGSFD) form a disordered region.

Part of a cortical microtubule stabilization complex (CMSC) composed of KANK1, PPFIA1, PPFIBP1, ERC1/ELKS, PHLDB2/LL5beta, CLASPs, KIF21A and possibly additional interactors; within CMSCs KANK1 and PHLDB2/LL5beta appear to be the core components for targeting of microtubule-binding proteins KIF21A and CLASPs, whereas PPFIA1, PPFIBP1 and ERC1/ELKS serve as scaffolds for protein clustering. Interacts (via KN motif) with TLN1 (via R7 domain); this mediates CMSC clustering around focal adhesions. Interacts (via CC1 domain, residues 244-339) with PPFIBP1. Interacts (via ANK repeats 1-5) with KIF21A (via residues 1142-1169). Interacts with YWHAQ; the interaction requires KANK1 phosphorylation at Ser-325 and is enhanced by growth factor stimulation. Interacts with YWHAB, YWHAG, YWHAE, YWHAH, YWHAZ and SFN; the interaction requires KANK1 phosphorylation at Ser-325. Interacts with ARFGEF1; however, colocalization cannot be experimentally confirmed. Interacts with BAIAP2. Interacts with CTNNB1. Interacts (via coiled coil domain) with DAAM1 (via coiled coil domain).

The protein resides in the cytoplasm. Its subcellular location is the cell cortex. It is found in the cell projection. It localises to the ruffle membrane. The protein localises to the nucleus. Its function is as follows. Adapter protein that links structural and signaling protein complexes positioned to guide microtubule and actin cytoskeleton dynamics during cell morphogenesis. At focal adhesions (FAs) rims, organizes cortical microtubule stabilizing complexes (CMSCs) and directly interacts with major FA component TLN1, forming macromolecular assemblies positioned to control microtubule-actin crosstalk at the cell edge. Recruits KIF21A in CMSCs at axonal growth cones and regulates axon guidance by suppressing microtubule growth without inducing microtubule disassembly once it reaches the cell cortex. Interacts with ARFGEF1 and participates in establishing microtubule-organizing center (MTOC) orientation and directed cell movement in wound healing. Regulates actin stress fiber formation and cell migration by inhibiting RHOA activation in response to growth factors; this function involves phosphorylation through PI3K/Akt signaling and may depend on the competitive interaction with 14-3-3 adapter proteins to sequester them from active complexes. Inhibits the formation of lamellipodia but not of filopodia; this function may depend on the competitive interaction with BAIAP2 to block its association with activated RAC1. Inhibits fibronectin-mediated cell spreading; this function is partially mediated by BAIAP2. In the nucleus, is involved in beta-catenin-dependent activation of transcription. During cell division, may regulate DAAM1-dependent RHOA activation that signals centrosome maturation and chromosomal segregation. May also be involved in contractile ring formation during cytokinesis. Potential tumor suppressor for renal cell carcinoma. This Mus musculus (Mouse) protein is KN motif and ankyrin repeat domains 1.